A 402-amino-acid chain; its full sequence is Tryptophan synthase beta chain (402 aa).

At lysine 91 the chain carries N6-(pyridoxal phosphate)lysine.

Belongs to the TrpB family. Tetramer of two alpha and two beta chains. Pyridoxal 5'-phosphate is required as a cofactor.

It carries out the reaction (1S,2R)-1-C-(indol-3-yl)glycerol 3-phosphate + L-serine = D-glyceraldehyde 3-phosphate + L-tryptophan + H2O. It functions in the pathway amino-acid biosynthesis; L-tryptophan biosynthesis; L-tryptophan from chorismate: step 5/5. Functionally, the beta subunit is responsible for the synthesis of L-tryptophan from indole and L-serine. The polypeptide is Tryptophan synthase beta chain (trpB) (Lactococcus lactis subsp. lactis (strain IL1403) (Streptococcus lactis)).